Here is a 7760-residue protein sequence, read N- to C-terminus: Malpinin synthetase (7760 aa).

Disordered stretches follow at residues 42–115 (ENPE…VNEK) and 161–180 (LDLP…GDRV). Residues 65-79 (TPRSASPLSSYTGSP) are compositionally biased toward polar residues. The segment at 87 to 389 (TELSRTLSGD…LSLDERTFLL (303 aa)) is condensation 1. Residues 164–180 (PTDRPRPSHPSFEGDRV) show a composition bias toward basic and acidic residues. The tract at residues 409–813 (FEQQAERRPH…GRNDHQVKIR (405 aa)) is adenylation 1. Residues 926-1000 (PPQGELETAI…AFAHAIGQHR (75 aa)) enclose the Carrier 1 domain. Ser961 bears the O-(pantetheine 4'-phosphoryl)serine mark. The interval 1046 to 1477 (QDIYALAPLQ…VLPADERKLL (432 aa)) is dual epimerase/condensation (E/C) domain 1. The tract at residues 1498-1893 (FEQYADRVPN…GRTDYQVKIR (396 aa)) is adenylation 2. The 75-residue stretch at 2003-2077 (APEGEVENAI…ALAQSIGEHR (75 aa)) folds into the Carrier 2 domain. Position 2038 is an O-(pantetheine 4'-phosphoryl)serine (Ser2038). Positions 2099–2558 (PLIDLNQNDI…LPTEERQLLT (460 aa)) are dual epimerase/condensation (E/C) domain 2. Residues 2578-2973 (FEQHVDRAPD…GRADFQVKIR (396 aa)) form an adenylation 3 region. The Carrier 3 domain occupies 3083-3157 (APQGAVEAAI…ALAQSIGEHR (75 aa)). Residue Ser3118 is modified to O-(pantetheine 4'-phosphoryl)serine. Positions 3203-3634 (QDIYALAPLQ…HLNVLPAEER (432 aa)) are dual epimerase/condensation (E/C) domain 3. An adenylation 4 region spans residues 3658 to 4057 (FEQQAERTPD…GRNDDQIKIR (400 aa)). The 75-residue stretch at 4174–4248 (APQGEVETAL…AFASRVQEQL (75 aa)) folds into the Carrier 4 domain. Ser4209 is modified (O-(pantetheine 4'-phosphoryl)serine). The condensation 2 stretch occupies residues 4267–4705 (LPLSFAQQRL…AAEILSQDER (439 aa)). The tract at residues 4729–5133 (FEQRVESTPD…GRNDHQVKIR (405 aa)) is adenylation 5. A Carrier 5 domain is found at 5250-5324 (APEGEVETAI…VFAASIGHHQ (75 aa)). Ser5285 is subject to O-(pantetheine 4'-phosphoryl)serine. The tract at residues 5370–5804 (QDIYSLSPLQ…VLPAEERTLL (435 aa)) is dual dehydration/condensation (C*) domain. The segment at 5825–6224 (FEQQSERTPE…GRNDDQVKIR (400 aa)) is adenylation 6. The region spanning 6338 to 6412 (APQGEVETAL…ALAQSIGQHH (75 aa)) is the Carrier 6 domain. The residue at position 6373 (Ser6373) is an O-(pantetheine 4'-phosphoryl)serine. Residues 6458–6890 (QDIYALSPLQ…QLDTVPAEEH (433 aa)) are dual epimerase/condensation (E/C) domain 4. The tract at residues 6914 to 7300 (FEHQVERTPA…KFLPDGNVVC (387 aa)) is adenylation 7. Residues 7428–7503 (EPRGAIENIL…ELAPRLLATG (76 aa)) form the Carrier 7 domain. Ser7463 is subject to O-(pantetheine 4'-phosphoryl)serine. Residues 7561 to 7722 (DNGNMASSLD…KPYVQGSIEV (162 aa)) form a thioesterase (TE) domain region.

It belongs to the NRP synthetase family.

Functionally, heptamodular nonribosomal peptide synthetase that catalyzes the biosynthesis of malpinins, natural products that show biosurfactant activities. Malpinins are acetylated hexapeptides (Ac-D-Leu/Val-D-Arg-D-Leu/Val-L-Phe/Leu-Dhb-D-Trp) containing a non-canonical amino acid derived from dehydration of L-Trp, (Z)-dehydrobutyrine (Dhb), at position 5, as well as a C-terminal D-amino acid, D-tryptophan, that can be oxidized to kynurenine. Incorporated D-amino acids in positions 1, 3 and 4 are variable resulting in the malpinin A-congeners malpinin B to E. Both modules M1 and M3 have relaxed specificity towards aliphatic amino acids (L-Leu &gt; L-Met &gt; L/D-Val &gt; L-Cys), explaining Val at position 1 and 3 in malpinin A-congeners malpinin B to D. The incorporation of L-Leu, but not N-acetyl-L-Leu by module 1 suggests the N-terminal acetylation occurs at a later stage of biosynthesis. Similar to M1 and M3, M4 has a broad substrate spectrum showing the highest activity with L-Phe followed by other hydrophobic amino acids (L-Phe &gt; L-Met = L-Trp). In contrast, M2, M5 and M6 are highly specific for L-Arg, L-Thr, and L-Trp, respectively. Solely, M7 converted its preferred substrate (L-Phe) with a 15 000-fold reduced turnover rate compared to the most active module M6, indicating that its A domain cannot contribute to the malpinin biosynthesis due to low activity. Since the last T domain in malA is apparently not loaded with an amino acid, either the TE domain must offload the oligopeptide from the preceding T domain or the dual E/C domain of M7 must transfer the final peptide chain to the free acceptor T domain of M7 prior to release. In Mortierella alpina (Oleaginous fungus), this protein is Malpinin synthetase.